Reading from the N-terminus, the 25-residue chain is Nicotinic acetylcholine receptor-binding protein Mnn-4 (25 aa).

Cysteines 3 and 20 form a disulfide.

It belongs to the three-finger toxin family. Short-chain subfamily. Expressed by the venom gland.

Its subcellular location is the secreted. In terms of biological role, binds and may inhibit nicotinic acetylcholine receptors (nAChR). This chain is Nicotinic acetylcholine receptor-binding protein Mnn-4, found in Micrurus nigrocinctus (Central American coral snake).